We begin with the raw amino-acid sequence, 363 residues long: NAD(P)H-quinone oxidoreductase subunit 1, chloroplastic (363 aa).

The next 7 helical transmembrane spans lie at 26–46 (IIWI…GVLV), 98–118 (FSIG…VIPF), 127–147 (LTIG…GLLM), 246–266 (TEYS…NLLV), 268–288 (SLFV…YIFV), 300–320 (VFGP…FLFI), and 336–356 (LLNL…LLTT).

The protein belongs to the complex I subunit 1 family. NDH is composed of at least 16 different subunits, 5 of which are encoded in the nucleus.

It is found in the plastid. It localises to the chloroplast thylakoid membrane. It catalyses the reaction a plastoquinone + NADH + (n+1) H(+)(in) = a plastoquinol + NAD(+) + n H(+)(out). The enzyme catalyses a plastoquinone + NADPH + (n+1) H(+)(in) = a plastoquinol + NADP(+) + n H(+)(out). Its function is as follows. NDH shuttles electrons from NAD(P)H:plastoquinone, via FMN and iron-sulfur (Fe-S) centers, to quinones in the photosynthetic chain and possibly in a chloroplast respiratory chain. The immediate electron acceptor for the enzyme in this species is believed to be plastoquinone. Couples the redox reaction to proton translocation, and thus conserves the redox energy in a proton gradient. The protein is NAD(P)H-quinone oxidoreductase subunit 1, chloroplastic of Coffea arabica (Arabian coffee).